The following is a 115-amino-acid chain: MVSTPQFLVFLLFWIPASRGDILLTQSPAILSVSPGERVSFSCRASQSIGTSIHWYQQRTNGSPRLLIKYASESISGIPSRFSGSGSGTDFTLSINSVESEDIADYYCQQSNSWP.

The first 20 residues, 1 to 20, serve as a signal peptide directing secretion; it reads MVSTPQFLVFLLFWIPASRG. Positions 21–43 are framework-1; the sequence is DILLTQSPAILSVSPGERVSFSC. A disulfide bridge links C43 with C108. Residues 44–54 form a complementarity-determining-1 region; the sequence is RASQSIGTSIH. The framework-2 stretch occupies residues 55 to 69; that stretch reads WYQQRTNGSPRLLIK. The interval 70-76 is complementarity-determining-2; sequence YASESIS. The framework-3 stretch occupies residues 77–108; it reads GIPSRFSGSGSGTDFTLSINSVESEDIADYYC. Residues 109 to 115 form a complementarity-determining-3 region; the sequence is QQSNSWP.

This is Immunoglobulin kappa variable 5-48 from Mus musculus (Mouse).